Here is a 78-residue protein sequence, read N- to C-terminus: Small ribosomal subunit protein bS18 (78 aa).

The protein belongs to the bacterial ribosomal protein bS18 family. Part of the 30S ribosomal subunit. Forms a tight heterodimer with protein bS6.

Functionally, binds as a heterodimer with protein bS6 to the central domain of the 16S rRNA, where it helps stabilize the platform of the 30S subunit. This is Small ribosomal subunit protein bS18 from Lactobacillus delbrueckii subsp. bulgaricus (strain ATCC 11842 / DSM 20081 / BCRC 10696 / JCM 1002 / NBRC 13953 / NCIMB 11778 / NCTC 12712 / WDCM 00102 / Lb 14).